We begin with the raw amino-acid sequence, 265 residues long: Mlc titration factor A (265 aa).

Residues His111, His148, His152, and Glu211 each contribute to the Zn(2+) site.

It belongs to the MtfA family. Interacts with Mlc. The cofactor is Zn(2+).

The protein localises to the cytoplasm. Functionally, involved in the modulation of the activity of the glucose-phosphotransferase system (glucose-PTS). Interacts with the transcriptional repressor Mlc, preventing its interaction with DNA and leading to the modulation of expression of genes regulated by Mlc, including ptsG, which encodes the PTS system glucose-specific EIICB component. Its function is as follows. Shows zinc-dependent metallopeptidase activity. The polypeptide is Mlc titration factor A (Escherichia coli (strain UTI89 / UPEC)).